A 263-amino-acid polypeptide reads, in one-letter code: Acetyl-coenzyme A carboxylase carboxyl transferase subunit beta (263 aa).

A CoA carboxyltransferase N-terminal domain is found at 1-263 (MDCPSCKVSY…LKETPKKKKA (263 aa)). The Zn(2+) site is built by Cys-3, Cys-6, Cys-22, and Cys-25. A C4-type zinc finger spans residues 3–25 (CPSCKVSYDEEVFTDNLMVCPHC).

This sequence belongs to the AccD/PCCB family. As to quaternary structure, acetyl-CoA carboxylase is a heterohexamer composed of biotin carboxyl carrier protein (AccB), biotin carboxylase (AccC) and two subunits each of ACCase subunit alpha (AccA) and ACCase subunit beta (AccD). Zn(2+) is required as a cofactor.

The protein resides in the cytoplasm. It carries out the reaction N(6)-carboxybiotinyl-L-lysyl-[protein] + acetyl-CoA = N(6)-biotinyl-L-lysyl-[protein] + malonyl-CoA. The protein operates within lipid metabolism; malonyl-CoA biosynthesis; malonyl-CoA from acetyl-CoA: step 1/1. Functionally, component of the acetyl coenzyme A carboxylase (ACC) complex. Biotin carboxylase (BC) catalyzes the carboxylation of biotin on its carrier protein (BCCP) and then the CO(2) group is transferred by the transcarboxylase to acetyl-CoA to form malonyl-CoA. The chain is Acetyl-coenzyme A carboxylase carboxyl transferase subunit beta from Treponema denticola (strain ATCC 35405 / DSM 14222 / CIP 103919 / JCM 8153 / KCTC 15104).